The following is a 503-amino-acid chain: DnaJ homolog subfamily C member 3 (503 aa).

Residues 1–31 (MVSAAASAGRLGSALPFLLVLLDLQYQGAEC) form the signal peptide. 9 TPR repeats span residues 37-70 (VEKQ…DSDN), 71-104 (YIAY…KQDF), 105-137 (TSRL…NPSN), 153-186 (LQRL…CVWD), 187-220 (AELR…KSDN), 221-254 (TEAF…DQDH), 267-300 (LNKQ…EPDV), 305-338 (TRAK…EPTN), and 339-372 (VNAL…SEND). A disulfide bond links cysteine 247 and cysteine 257. A disulfide bridge connects residues cysteine 312 and cysteine 328. The segment at 374-392 (QIREGLERAQRMLKQSQKR) is flexible linker. A J domain is found at 393–461 (DYYKILGVKR…EMRRKFDAGE (69 aa)).

It localises to the endoplasmic reticulum. In terms of biological role, may be involved in the unfolded protein response (UPR) during ER stress. This chain is DnaJ homolog subfamily C member 3 (DNAJC3), found in Gallus gallus (Chicken).